Here is a 324-residue protein sequence, read N- to C-terminus: MAKGIVHYEVGEQVDVYLLIKSVTKGIASNGKPFLTLILQDKTGDIEAKLWDVSPEDESVYVPESIVKVLGDIHNYRGKMQLKIRSIRLAHEGDAVRVSDFLETAPMKREDMMEKITEYIFAMQNPNIQRITRYLLKKYEQKFFDYPAATKNHHEFISGLAYHVVSMLELAKALVNLYPSLNRDLLYAGVILHDLGKVIELSGPVSASYTLEGKLLGHIPIMVGEISKAAEHLGISGEEIVVLQHMVLSHHGKAEWGSPKPPMVKEAEILHYIDNLDAKMNMIDRALEKVKPGEFTERIYALENRSFYKPIFSSVLMQERGGTS.

The 117-residue stretch at 163-279 folds into the HD domain; the sequence is HVVSMLELAK…LHYIDNLDAK (117 aa).

Belongs to the YhaM family.

In terms of biological role, shows a 3'-5' exoribonuclease activity. The sequence is that of 3'-5' exoribonuclease YhaM from Geobacillus sp. (strain WCH70).